Reading from the N-terminus, the 320-residue chain is 1,5-anhydro-D-fructose reductase (320 aa).

The Proton donor role is filled by Tyr40. His102 serves as a coordination point for substrate. NADP(+)-binding positions include Gln194 and 265–277 (IPGS…IKEN).

This sequence belongs to the aldo/keto reductase family. In terms of assembly, monomer.

It localises to the cytoplasm. The catalysed reaction is 1,5-anhydro-D-glucitol + NADP(+) = 1,5-anhydro-D-fructose + NADPH + H(+). Its activity is regulated as follows. Inhibited by p-chloromercuribenzoic acid and alkyliodines. Catalyzes the NADPH-dependent reduction of 1,5-anhydro-D-fructose (AF) to 1,5-anhydro-D-glucitol. This is 1,5-anhydro-D-fructose reductase (AKR1E2) from Macaca fascicularis (Crab-eating macaque).